The chain runs to 374 residues: Muconate cycloisomerase 1 (374 aa).

It belongs to the cycloisomerase 2 family. Homotetramer.

It carries out the reaction (S)-muconolactone = cis,cis-muconate + H(+). Its pathway is aromatic compound metabolism; beta-ketoadipate pathway; 5-oxo-4,5-dihydro-2-furylacetate from catechol: step 2/3. Its function is as follows. Catalyzes a syn cycloisomerization. This Cutaneotrichosporon cutaneum (Yeast) protein is Muconate cycloisomerase 1.